The primary structure comprises 138 residues: Large ribosomal subunit protein uL16 (138 aa).

A compositionally biased stretch (basic residues) spans 1–19 (MLIPKRVKYRRQHRPHRSG). The interval 1–24 (MLIPKRVKYRRQHRPHRSGVSKGG) is disordered.

It belongs to the universal ribosomal protein uL16 family. As to quaternary structure, part of the 50S ribosomal subunit.

Binds 23S rRNA and is also seen to make contacts with the A and possibly P site tRNAs. This chain is Large ribosomal subunit protein uL16, found in Corynebacterium jeikeium (strain K411).